The sequence spans 219 residues: Uracil-DNA glycosylase (219 aa).

Catalysis depends on D64, which acts as the Proton acceptor.

This sequence belongs to the uracil-DNA glycosylase (UDG) superfamily. UNG family.

The protein localises to the cytoplasm. It catalyses the reaction Hydrolyzes single-stranded DNA or mismatched double-stranded DNA and polynucleotides, releasing free uracil.. Its function is as follows. Excises uracil residues from the DNA which can arise as a result of misincorporation of dUMP residues by DNA polymerase or due to deamination of cytosine. The sequence is that of Uracil-DNA glycosylase from Leuconostoc citreum (strain KM20).